The primary structure comprises 654 residues: Amyloid beta precursor like protein 1 (654 aa).

An N-terminal signal peptide occupies residues 1-38 (MGPTSPAARGQGRRWRPPPLPLLLPLSLLLLRAQLAVG). Over 39–584 (NLAVGSPSAA…APSGTGVSRE (546 aa)) the chain is Extracellular. The interval 50–146 (APGSAQVAGL…PFHCLPGEFV (97 aa)) is GFLD subdomain. One can recognise an E1 domain in the interval 50–212 (APGSAQVAGL…RGVEYVCCPP (163 aa)). Cystine bridges form between Cys60/Cys84, Cys95/Cys140, Cys120/Cys128, Cys156/Cys210, Cys167/Cys197, and Cys181/Cys209. The interval 154 to 212 (EGCRFLHQERMDQCESSTRRHQEAQEACSSQGLILHGSGMLLPCGSDRFRGVEYVCCPP) is cuBD subdomain. His174 lines the Cu(2+) pocket. Glu206, Cys209, and Cys210 together coordinate Zn(2+). Residues 214-297 (ATPNPSGMAA…VTPTPRPTDG (84 aa)) form a disordered region. The span at 262 to 272 (QAEEEEEEEEE) shows a compositional bias: acidic residues. One can recognise an E2 domain in the interval 297–488 (GVDVYFGMPG…QELRPQIQEL (192 aa)). Heparin-binding regions lie at residues 314–346 (FLRA…SKNL) and 414–445 (LMAL…DPEK). The segment at 446–463 (AQQMRFQVQTHLQVIEER) is collagen-binding. N-linked (GlcNAc...) asparagine glycosylation is present at Asn465. Residues 497–580 (SELDASVPGS…RDELAPSGTG (84 aa)) are disordered. The span at 508–523 (SEDKGSLQPPESKDDP) shows a compositional bias: basic and acidic residues. A compositionally biased stretch (polar residues) spans 529–539 (KGSTDQESSSS). Asn555 carries N-linked (GlcNAc...) asparagine glycosylation. His565 is a binding site for Cu(2+). His565 is a binding site for Zn(2+). The helical transmembrane segment at 585–607 (ALSGLLIMGAGGGSLIVLSLLLL) threads the bilayer. Positions 608 to 619 (RKKKPYGTISHG) match the Basolateral sorting signal motif. Residues 608-654 (RKKKPYGTISHGVVEVDPMLTLEEQQLRELQRHGYENPTYRFLEERP) lie on the Cytoplasmic side of the membrane. An interaction with DAB1 region spans residues 636-652 (ELQRHGYENPTYRFLEE). The tract at residues 640 to 654 (HGYENPTYRFLEERP) is interaction with DAB2. Residues 644-647 (NPTY) carry the NPXY motif; contains endocytosis signal motif.

It belongs to the APP family. In terms of assembly, monomer and homodimer. Heparin binding promotes homodimerization. Binds, via its C-terminus, to the PID domain of several cytoplasmic proteins, including APBB and APBA family members, MAPK8IP1 and DAB1. Binding to Dab1 inhibits its serine phosphorylation. Interacts with CPEB1. Interacts (via NPXY motif) with DAB2 (via PID domain); the interaction is impaired by tyrosine phosphorylation of the NPXY motif. Interacts (via NPXY motif) with DAB1. Post-translationally, proteolytically cleaved by caspases during neuronal apoptosis. Cleaved, in vitro, at Asp-624 by caspase-3. In terms of processing, N- and O-glycosylated.

The protein localises to the cell membrane. Its subcellular location is the cytoplasm. Its function is as follows. May play a role in postsynaptic function. The C-terminal gamma-secretase processed fragment, ALID1, activates transcription activation through APBB1 (Fe65) binding. Couples to JIP signal transduction through C-terminal binding. May interact with cellular G-protein signaling pathways. Can regulate neurite outgrowth through binding to components of the extracellular matrix such as heparin and collagen I. The gamma-CTF peptide, C30, is a potent enhancer of neuronal apoptosis. The sequence is that of Amyloid beta precursor like protein 1 (Aplp1) from Mus musculus (Mouse).